The sequence spans 225 residues: Octanoyltransferase (225 aa).

A BPL/LPL catalytic domain is found at 43 to 225 (GTAPELVWLL…KTFRDVFGRG (183 aa)). Substrate contacts are provided by residues 82-89 (RGGQYTYH), 157-159 (AIG), and 170-172 (GVS). The active-site Acyl-thioester intermediate is Cys188.

The protein belongs to the LipB family.

The protein localises to the cytoplasm. The enzyme catalyses octanoyl-[ACP] + L-lysyl-[protein] = N(6)-octanoyl-L-lysyl-[protein] + holo-[ACP] + H(+). It participates in protein modification; protein lipoylation via endogenous pathway; protein N(6)-(lipoyl)lysine from octanoyl-[acyl-carrier-protein]: step 1/2. Functionally, catalyzes the transfer of endogenously produced octanoic acid from octanoyl-acyl-carrier-protein onto the lipoyl domains of lipoate-dependent enzymes. Lipoyl-ACP can also act as a substrate although octanoyl-ACP is likely to be the physiological substrate. This Parvibaculum lavamentivorans (strain DS-1 / DSM 13023 / NCIMB 13966) protein is Octanoyltransferase.